We begin with the raw amino-acid sequence, 303 residues long: T-box protein 38 (303 aa).

Positions 14–195 (LSTPEIWEEF…HNKFASGFRS (182 aa)) form a DNA-binding region, T-box. The tract at residues 193 to 225 (FRSNGKRRLSSDSENSENSPPKRSKLVTPPTIS) is disordered. Positions 204–213 (DSENSENSPP) are enriched in low complexity.

Its subcellular location is the nucleus. Its function is as follows. Transcription factor. Required for mesodermal induction, acting redundantly with transcription factor tbx-37. Together with tbx-37, acts by inducing cell fates in the AB lineage, thereby playing a role in development of the anterior pharynx. In Caenorhabditis elegans, this protein is T-box protein 38 (tbx-38).